Reading from the N-terminus, the 123-residue chain is Heat-labile enterotoxin IIA, B chain (123 aa).

The first 19 residues, 1–19 (MSSKKIIGAFVLMTGILSG), serve as a signal peptide directing secretion. Cys33 and Cys104 are disulfide-bonded.

Heterohexamer of one A chain and of five B chains.

In terms of biological role, the biological activity of the toxin is produced by the A chain, which activates intracellular adenyl cyclase. This Escherichia coli protein is Heat-labile enterotoxin IIA, B chain.